Reading from the N-terminus, the 187-residue chain is Threonylcarbamoyl-AMP synthase (187 aa).

In terms of domain architecture, YrdC-like spans 3-187 (EVLPADVAEL…AKSGQVIRKG (185 aa)).

It belongs to the SUA5 family. TsaC subfamily.

Its subcellular location is the cytoplasm. The enzyme catalyses L-threonine + hydrogencarbonate + ATP = L-threonylcarbamoyladenylate + diphosphate + H2O. Its function is as follows. Required for the formation of a threonylcarbamoyl group on adenosine at position 37 (t(6)A37) in tRNAs that read codons beginning with adenine. Catalyzes the conversion of L-threonine, HCO(3)(-)/CO(2) and ATP to give threonylcarbamoyl-AMP (TC-AMP) as the acyladenylate intermediate, with the release of diphosphate. In Shewanella halifaxensis (strain HAW-EB4), this protein is Threonylcarbamoyl-AMP synthase.